A 202-amino-acid chain; its full sequence is Recombination protein RecR (202 aa).

The segment at 61-76 (CARCNSFTEDDVCVIC) adopts a C4-type zinc-finger fold. The region spanning 84 to 179 (SLLCIVETPA…KVTRLARGVP (96 aa)) is the Toprim domain.

This sequence belongs to the RecR family.

May play a role in DNA repair. It seems to be involved in an RecBC-independent recombinational process of DNA repair. It may act with RecF and RecO. This is Recombination protein RecR from Bordetella avium (strain 197N).